The following is a 187-amino-acid chain: Epididymal-specific lipocalin-10 (187 aa).

A signal peptide spans 1 to 19 (MRQGLLVLALVLVLVLVLA). Cysteines 90 and 163 form a disulfide. A glycan (N-linked (GlcNAc...) asparagine) is linked at Asn149. Lys170 is modified (N6-acetyllysine).

This sequence belongs to the calycin superfamily. Lipocalin family.

The protein localises to the secreted. In terms of biological role, may play a role in male fertility. May act as a retinoid carrier protein within the epididymis. The sequence is that of Epididymal-specific lipocalin-10 (LCN10) from Homo sapiens (Human).